A 965-amino-acid chain; its full sequence is MLPGRLCLVPLLLALGVGSGGGSGDGGDSRRRRLLAAKVNKHKPWIETSYHGVITENNDTVILDPTIVALDKDAPVPFAGEICAFKIHGQELPFEAVVLNKTSGEGRLRAKSPIDCELQKEYTFIIQAYDCGAGPQEAAWKKSHKAVVHIQVKDVNEFAPTFKEPAYKAIVTEGKIYDSILQVEAIDEDCSPQYSQICNYEIVTTDVPFAIDRNGNIRNTEKLSYDKQRQYEILVTAYDCGQKPAAQDTLVQVDVKPVCKPGWQDWTKRIEYQPGSGSMPLFPGIHLETCDGAVSSLQVTAELQTNYIGKGCDRETYSEKSLQKLCGASSGIIDLLPSPSAATNWTAGLLVDSSEMIFKFDGRQGAKIPDGIVPKNLTDQFTITMWMKHGPSPGVRAEKETILCNSDKTEMNRHHYALYVHNCRLVFLLRKDFDQADTFRPAEFHWKLDQICDKEWHYYVINVEFPVVTLYMDGATYEPYLVTNDWPIHPSHIAMQLTVGACWQGGEVAKPRFAQFFHGSLASLTIRPGKMESQKVISCLQACKEGLDINSLESLGRGIKYHFNPSQSILVMEGDDIGNINQALQKVSYINSRQFPTAGVRRLRLSSKVQCFGEDVCISIPDVDAYIMVLQAIEPQITLQGTERFWRPAAQFESARGVTLFPDIKIISTFAKTEASGDLRATGTAPKSAVLEEMLHNLDFCDILVLGGDLDPRQECLELNHSELHQRHLDATNSTAGYSIYGVGSMSRYEQVLHHLRYRNWHPTSLETRRFQIKCSELNGRYTSNEFNLEVSVLHEVRVSDTEHVNHLIVQPPFLQSVYHPETRSSIQRSSVVPSIATVVIIISVCMLVFVVAMGVYRVRIAHQHFIQETEAAKEAEMDWDDSALTITVNPMEKHEGPGHGEDETEGEEEEEAEEGMSSSSSGSDDSEEEEEEGMGRVRHGQSGTSSQRPERSTWNTAGVINIWK.

Residues 1-20 (MLPGRLCLVPLLLALGVGSG) form the signal peptide. The Extracellular segment spans residues 21–835 (GGSGDGGDSR…SIQRSSVVPS (815 aa)). Cadherin domains follow at residues 46 to 162 (IETS…APTF) and 163 to 282 (KEPA…MPLF). Residues N58 and N100 are each glycosylated (N-linked (GlcNAc...) asparagine). 4 N-linked (GlcNAc...) asparagine glycosylation sites follow: N344, N376, N720, and N733. Residues 836–856 (IATVVIIISVCMLVFVVAMGV) form a helical membrane-spanning segment. Over 857–965 (YRVRIAHQHF…NTAGVINIWK (109 aa)) the chain is Cytoplasmic. A disordered region spans residues 891–965 (PMEKHEGPGH…NTAGVINIWK (75 aa)). The span at 892–902 (MEKHEGPGHGE) shows a compositional bias: basic and acidic residues. Over residues 903 to 915 (DETEGEEEEEAEE) the composition is skewed to acidic residues. Positions 942–959 (QSGTSSQRPERSTWNTAG) are enriched in polar residues.

The protein belongs to the calsyntenin family. In terms of processing, proteolytically processed under normal cellular conditions. A primary zeta-cleavage generates a large extracellular (soluble) N-terminal domain (sAlc) and a short C-terminal transmembrane fragment (CTF1). A secondary cleavage catalyzed by gamma-secretase within the transmembrane domain releases the beta-Alc-gamma chain in the extracellular milieu and produces an intracellular fragment (AlcICD). This processing is strongly suppressed in the tripartite complex formed with APBA2 and APP, which seems to prevent the association with PSEN1.

The protein resides in the postsynaptic cell membrane. It is found in the endoplasmic reticulum membrane. The protein localises to the golgi apparatus membrane. It localises to the cell projection. Its subcellular location is the dendrite. Its function is as follows. Postsynaptic adhesion molecule that binds to presynaptic neurexins to mediate synapse formation, and which is involved in learning and memory. Promotes synapse development by acting as a cell adhesion molecule at the postsynaptic membrane, which associates with neurexin-alpha at the presynaptic membrane. This chain is Calsyntenin-2, found in Rattus norvegicus (Rat).